A 287-amino-acid polypeptide reads, in one-letter code: Putative inactive carboxylesterase 4 (287 aa).

The N-terminal stretch at 1-18 (MWLPALVLATLAASAAWA) is a signal peptide. An N-linked (GlcNAc...) asparagine glycan is attached at N80.

This sequence belongs to the type-B carboxylesterase/lipase family. As to expression, expressed in placenta.

Its subcellular location is the secreted. In terms of biological role, has no esterase activity. The sequence is that of Putative inactive carboxylesterase 4 (CES1P1) from Homo sapiens (Human).